Reading from the N-terminus, the 459-residue chain is Phosphoglucosamine mutase (459 aa).

Ser100 (phosphoserine intermediate) is an active-site residue. Residues Ser100, Asp256, Asp258, and Asp260 each contribute to the Mg(2+) site. At Ser100 the chain carries Phosphoserine.

This sequence belongs to the phosphohexose mutase family. It depends on Mg(2+) as a cofactor. In terms of processing, activated by phosphorylation.

It catalyses the reaction alpha-D-glucosamine 1-phosphate = D-glucosamine 6-phosphate. Catalyzes the conversion of glucosamine-6-phosphate to glucosamine-1-phosphate. This chain is Phosphoglucosamine mutase, found in Heliobacterium modesticaldum (strain ATCC 51547 / Ice1).